The chain runs to 115 residues: Ribonuclease P protein component (115 aa).

The protein belongs to the RnpA family. In terms of assembly, consists of a catalytic RNA component (M1 or rnpB) and a protein subunit.

It catalyses the reaction Endonucleolytic cleavage of RNA, removing 5'-extranucleotides from tRNA precursor.. Functionally, RNaseP catalyzes the removal of the 5'-leader sequence from pre-tRNA to produce the mature 5'-terminus. It can also cleave other RNA substrates such as 4.5S RNA. The protein component plays an auxiliary but essential role in vivo by binding to the 5'-leader sequence and broadening the substrate specificity of the ribozyme. The chain is Ribonuclease P protein component from Bacillus cereus (strain Q1).